Here is a 347-residue protein sequence, read N- to C-terminus: 5-deoxyribose 1-phosphate isomerase (347 aa).

Residues 48-50 (RGA), Arg91, and Gln198 contribute to the substrate site. Residue Asp239 is the Proton donor of the active site. 249–250 (NK) serves as a coordination point for substrate.

The protein belongs to the EIF-2B alpha/beta/delta subunits family. DrdI subfamily.

It carries out the reaction 5-deoxy-alpha-D-ribose 1-phosphate = 5-deoxy-D-ribulose 1-phosphate. The protein operates within carbohydrate degradation. Functionally, catalyzes the isomerization of 5-deoxy-alpha-D-ribose 1-phosphate to 5-deoxy-D-ribulose 1-phosphate, as part of a 5-deoxyribose salvage pathway that recycles this toxic radical SAM enzyme by-product to mainstream metabolites. In Bacillus thuringiensis (strain Al Hakam), this protein is 5-deoxyribose 1-phosphate isomerase.